We begin with the raw amino-acid sequence, 688 residues long: Elongation factor G (688 aa).

In terms of domain architecture, tr-type G spans 8–282 (DKFRNFGIMA…GVVDYLPSPL (275 aa)). GTP-binding positions include 17 to 24 (AHIDAGKT), 81 to 85 (DTPGH), and 135 to 138 (NKMD).

This sequence belongs to the TRAFAC class translation factor GTPase superfamily. Classic translation factor GTPase family. EF-G/EF-2 subfamily.

It localises to the cytoplasm. Its function is as follows. Catalyzes the GTP-dependent ribosomal translocation step during translation elongation. During this step, the ribosome changes from the pre-translocational (PRE) to the post-translocational (POST) state as the newly formed A-site-bound peptidyl-tRNA and P-site-bound deacylated tRNA move to the P and E sites, respectively. Catalyzes the coordinated movement of the two tRNA molecules, the mRNA and conformational changes in the ribosome. In Clostridium botulinum (strain Alaska E43 / Type E3), this protein is Elongation factor G.